Consider the following 175-residue polypeptide: Thioredoxin M3, chloroplastic (175 aa).

A chloroplast-targeting transit peptide spans 1–59; it reads MAATATACPAPPPPRSLYRGVALAAPGRRRAGYGASSSAARRWPGCRRRWAAHRIRTVS. The Thioredoxin domain occupies 61 to 171; the sequence is AYSPRGAKTI…YVRAIEKSIS (111 aa). Active-site nucleophile residues include C95 and C98. Residues C95 and C98 are joined by a disulfide bond.

It belongs to the thioredoxin family. Plant M-type subfamily.

It localises to the plastid. The protein resides in the chloroplast. Its function is as follows. Probable thiol-disulfide oxidoreductase that may be involved in the redox regulation of chloroplastic enzymes. The protein is Thioredoxin M3, chloroplastic of Oryza sativa subsp. japonica (Rice).